A 679-amino-acid polypeptide reads, in one-letter code: Glycine--tRNA ligase beta subunit (679 aa).

This sequence belongs to the class-II aminoacyl-tRNA synthetase family. As to quaternary structure, tetramer of two alpha and two beta subunits.

The protein resides in the cytoplasm. The catalysed reaction is tRNA(Gly) + glycine + ATP = glycyl-tRNA(Gly) + AMP + diphosphate. This Streptococcus agalactiae serotype III (strain NEM316) protein is Glycine--tRNA ligase beta subunit.